A 90-amino-acid polypeptide reads, in one-letter code: Keratin-associated protein 19-1 (90 aa).

The tract at residues 5-84 (GSYYGGLGYS…CCRPSYNGGY (80 aa)) is 26 X 2 AA repeats of G-[YCGS].

It belongs to the KRTAP type 19 family. As to quaternary structure, interacts with hair keratins. Detected in the upper portion of the hair cortex.

Functionally, in the hair cortex, hair keratin intermediate filaments are embedded in an interfilamentous matrix, consisting of hair keratin-associated proteins (KRTAP), which are essential for the formation of a rigid and resistant hair shaft through their extensive disulfide bond cross-linking with abundant cysteine residues of hair keratins. The matrix proteins include the high-sulfur and high-glycine-tyrosine keratins. This Homo sapiens (Human) protein is Keratin-associated protein 19-1 (KRTAP19-1).